The primary structure comprises 178 residues: ATP synthase subunit delta (178 aa).

It belongs to the ATPase delta chain family. In terms of assembly, F-type ATPases have 2 components, F(1) - the catalytic core - and F(0) - the membrane proton channel. F(1) has five subunits: alpha(3), beta(3), gamma(1), delta(1), epsilon(1). F(0) has three main subunits: a(1), b(2) and c(10-14). The alpha and beta chains form an alternating ring which encloses part of the gamma chain. F(1) is attached to F(0) by a central stalk formed by the gamma and epsilon chains, while a peripheral stalk is formed by the delta and b chains.

Its subcellular location is the cell inner membrane. In terms of biological role, f(1)F(0) ATP synthase produces ATP from ADP in the presence of a proton or sodium gradient. F-type ATPases consist of two structural domains, F(1) containing the extramembraneous catalytic core and F(0) containing the membrane proton channel, linked together by a central stalk and a peripheral stalk. During catalysis, ATP synthesis in the catalytic domain of F(1) is coupled via a rotary mechanism of the central stalk subunits to proton translocation. Its function is as follows. This protein is part of the stalk that links CF(0) to CF(1). It either transmits conformational changes from CF(0) to CF(1) or is implicated in proton conduction. The protein is ATP synthase subunit delta of Hahella chejuensis (strain KCTC 2396).